Consider the following 391-residue polypeptide: MTSVVADSLTETKTDSQKPIATRKDGRIDLLGLSREDIRAALKSKGLDEKQAKLRTKQLWHWMYNRGAVAFDGMTDIAKTMRPWLAEHFAISRPEVVTMQISTDGTRKWLLKTDDGYDYEMVFIPDADRGTLCISSQIGCTLNCRFCNTGTMRLVRNLTVGEIVGQIMLARDSLDEWPSKPEGRLLTNVVMMGMGEPLYNFDNVRDALKLVMDGDGIALSRRRITLSTSGVVPMMARAGEEIGVNLAVSLHAVTKVVRDEIVPINKKYGIDELLAACAAYPGVNNARRITFEYVMLKDKNDSEEDAHELVRLLQYYRLPAKVNLIPFNPWPNSPYECSTPERIARFSEIVFNAGISAPVRRTRGQDIMAACGQLKSAAERQSKRDSMITLS.

Residues 1–20 are disordered; the sequence is MTSVVADSLTETKTDSQKPI. The span at 10–20 shows a compositional bias: basic and acidic residues; that stretch reads TETKTDSQKPI. The active-site Proton acceptor is the Glu-120. In terms of domain architecture, Radical SAM core spans 126–366; the sequence is DADRGTLCIS…APVRRTRGQD (241 aa). Cys-133 and Cys-371 are disulfide-bonded. [4Fe-4S] cluster contacts are provided by Cys-140, Cys-144, and Cys-147. S-adenosyl-L-methionine is bound by residues 195-196, Ser-227, 249-251, and Asn-328; these read GE and SLH. Cys-371 acts as the S-methylcysteine intermediate in catalysis.

Belongs to the radical SAM superfamily. RlmN family. [4Fe-4S] cluster is required as a cofactor.

It localises to the cytoplasm. It carries out the reaction adenosine(2503) in 23S rRNA + 2 reduced [2Fe-2S]-[ferredoxin] + 2 S-adenosyl-L-methionine = 2-methyladenosine(2503) in 23S rRNA + 5'-deoxyadenosine + L-methionine + 2 oxidized [2Fe-2S]-[ferredoxin] + S-adenosyl-L-homocysteine. It catalyses the reaction adenosine(37) in tRNA + 2 reduced [2Fe-2S]-[ferredoxin] + 2 S-adenosyl-L-methionine = 2-methyladenosine(37) in tRNA + 5'-deoxyadenosine + L-methionine + 2 oxidized [2Fe-2S]-[ferredoxin] + S-adenosyl-L-homocysteine. Functionally, specifically methylates position 2 of adenine 2503 in 23S rRNA and position 2 of adenine 37 in tRNAs. m2A2503 modification seems to play a crucial role in the proofreading step occurring at the peptidyl transferase center and thus would serve to optimize ribosomal fidelity. In Zymomonas mobilis subsp. mobilis (strain ATCC 31821 / ZM4 / CP4), this protein is Dual-specificity RNA methyltransferase RlmN.